A 357-amino-acid chain; its full sequence is Heat-inducible transcription repressor HrcA (357 aa).

It belongs to the HrcA family.

In terms of biological role, negative regulator of class I heat shock genes (grpE-dnaK-dnaJ and groELS operons). Prevents heat-shock induction of these operons. The polypeptide is Heat-inducible transcription repressor HrcA (Chlorobium limicola (strain DSM 245 / NBRC 103803 / 6330)).